The chain runs to 167 residues: Probable chorismate pyruvate-lyase (167 aa).

Substrate is bound by residues Arg71, Ile110, and Glu150.

It belongs to the UbiC family.

The protein localises to the cytoplasm. It catalyses the reaction chorismate = 4-hydroxybenzoate + pyruvate. The protein operates within cofactor biosynthesis; ubiquinone biosynthesis. Removes the pyruvyl group from chorismate, with concomitant aromatization of the ring, to provide 4-hydroxybenzoate (4HB) for the ubiquinone pathway. The chain is Probable chorismate pyruvate-lyase from Acinetobacter baylyi (strain ATCC 33305 / BD413 / ADP1).